A 428-amino-acid polypeptide reads, in one-letter code: Dihydroorotase (428 aa).

Residues histidine 61 and histidine 63 each coordinate Zn(2+). Substrate-binding positions include 63–65 (HLR) and asparagine 95. Aspartate 153, histidine 180, and histidine 233 together coordinate Zn(2+). Position 279 (asparagine 279) interacts with substrate. Residue aspartate 306 participates in Zn(2+) binding. Aspartate 306 is a catalytic residue. Substrate contacts are provided by residues histidine 310 and 324-325 (FG).

This sequence belongs to the metallo-dependent hydrolases superfamily. DHOase family. Class I DHOase subfamily. It depends on Zn(2+) as a cofactor.

The catalysed reaction is (S)-dihydroorotate + H2O = N-carbamoyl-L-aspartate + H(+). The protein operates within pyrimidine metabolism; UMP biosynthesis via de novo pathway; (S)-dihydroorotate from bicarbonate: step 3/3. In terms of biological role, catalyzes the reversible cyclization of carbamoyl aspartate to dihydroorotate. The protein is Dihydroorotase of Geobacillus thermodenitrificans (strain NG80-2).